A 597-amino-acid polypeptide reads, in one-letter code: Elongation factor 4 (597 aa).

The 183-residue stretch at 2-184 folds into the tr-type G domain; that stretch reads DHIRNFSIIA…ALIAKVPPPK (183 aa). Residues 14–19 and 131–134 contribute to the GTP site; these read DHGKST and NKID.

This sequence belongs to the TRAFAC class translation factor GTPase superfamily. Classic translation factor GTPase family. LepA subfamily.

It localises to the cell inner membrane. The enzyme catalyses GTP + H2O = GDP + phosphate + H(+). Its function is as follows. Required for accurate and efficient protein synthesis under certain stress conditions. May act as a fidelity factor of the translation reaction, by catalyzing a one-codon backward translocation of tRNAs on improperly translocated ribosomes. Back-translocation proceeds from a post-translocation (POST) complex to a pre-translocation (PRE) complex, thus giving elongation factor G a second chance to translocate the tRNAs correctly. Binds to ribosomes in a GTP-dependent manner. In Burkholderia vietnamiensis (strain G4 / LMG 22486) (Burkholderia cepacia (strain R1808)), this protein is Elongation factor 4.